We begin with the raw amino-acid sequence, 224 residues long: MYSNKNDKDKDKDQNNENNKNNDDEAISLKILVVGKLACGKTSIIQRYCHNNFQPKYKPTIGVDFQQKVLEIMGQKVLLQLWDIAGQERFGHMTRVYFQNAHGAVIVFDATRSGTFLGAKAWKDDIDYCFNNENLPTILLANKCDLLTPPYTFPEDINTFCEQNRFNKYFYTSAKEDTGINEALEELVKIILESYQTQEQSTGFKLSDQSQSTETTPTQSKTCC.

The disordered stretch occupies residues 1–22 (MYSNKNDKDKDKDQNNENNKNN). 35–42 (GKLACGKT) is a binding site for GTP. The short motif at 57–65 (YKPTIGVDF) is the Effector region element. Residues 83–87 (DIAGQ) and 142–145 (NKCD) contribute to the GTP site. A disordered region spans residues 203-224 (GFKLSDQSQSTETTPTQSKTCC). Positions 209–224 (QSQSTETTPTQSKTCC) are enriched in low complexity. S-geranylgeranyl cysteine attachment occurs at residues Cys-223 and Cys-224.

Belongs to the small GTPase superfamily. Rab family.

This Dictyostelium discoideum (Social amoeba) protein is Ras-related protein Rab-32C (rab32C).